Reading from the N-terminus, the 510-residue chain is Cytochrome c-552 (510 aa).

An N-terminal signal peptide occupies residues 1–50 (MVVFLFILYRQSDLKFKSMNGVIIVNTLKKRLFVATTMIWGLSVTLPVLA). His124 serves as a coordination point for heme c. Residues Cys152, Cys155, and Lys156 each contribute to the heme site. Cys190, Cys193, His194, Cys239, Cys242, and His243 together coordinate heme c. Residues Glu245, Tyr246, Lys291, and Gln293 each contribute to the Ca(2+) site. Tyr246 contacts substrate. His294 is a binding site for substrate. Residues His305, Cys312, Cys315, His316, His331, Cys344, Cys347, His348, and His423 each coordinate heme c.

It belongs to the cytochrome c-552 family. The cofactor is Ca(2+). Heme c is required as a cofactor.

It is found in the periplasm. It catalyses the reaction 6 Fe(III)-[cytochrome c] + NH4(+) + 2 H2O = 6 Fe(II)-[cytochrome c] + nitrite + 8 H(+). It participates in nitrogen metabolism; nitrate reduction (assimilation). Functionally, catalyzes the reduction of nitrite to ammonia, consuming six electrons in the process. This Pasteurella multocida (strain Pm70) protein is Cytochrome c-552.